Reading from the N-terminus, the 753-residue chain is 5-methyltetrahydropteroyltriglutamate--homocysteine methyltransferase (753 aa).

Residues 17 to 20 (RELK) and Lys117 contribute to the 5-methyltetrahydropteroyltri-L-glutamate site. Residues 431 to 433 (IGS) and Glu484 each bind L-homocysteine. L-methionine is bound by residues 431-433 (IGS) and Glu484. Residues 515–516 (RC) and Trp561 each bind 5-methyltetrahydropteroyltri-L-glutamate. Asp599 is an L-homocysteine binding site. Asp599 is an L-methionine binding site. A 5-methyltetrahydropteroyltri-L-glutamate-binding site is contributed by Glu605. Residues His641, Cys643, and Glu665 each contribute to the Zn(2+) site. The Proton donor role is filled by His694. Residue Cys726 coordinates Zn(2+).

It belongs to the vitamin-B12 independent methionine synthase family. The cofactor is Zn(2+).

It carries out the reaction 5-methyltetrahydropteroyltri-L-glutamate + L-homocysteine = tetrahydropteroyltri-L-glutamate + L-methionine. Its pathway is amino-acid biosynthesis; L-methionine biosynthesis via de novo pathway; L-methionine from L-homocysteine (MetE route): step 1/1. Functionally, catalyzes the transfer of a methyl group from 5-methyltetrahydrofolate to homocysteine resulting in methionine formation. The sequence is that of 5-methyltetrahydropteroyltriglutamate--homocysteine methyltransferase from Escherichia coli (strain ATCC 8739 / DSM 1576 / NBRC 3972 / NCIMB 8545 / WDCM 00012 / Crooks).